Here is a 95-residue protein sequence, read N- to C-terminus: Protein TusB (95 aa).

This sequence belongs to the DsrH/TusB family. Heterohexamer, formed by a dimer of trimers. The hexameric TusBCD complex contains 2 copies each of TusB, TusC and TusD. The TusBCD complex interacts with TusE.

It is found in the cytoplasm. Functionally, part of a sulfur-relay system required for 2-thiolation of 5-methylaminomethyl-2-thiouridine (mnm(5)s(2)U) at tRNA wobble positions. The polypeptide is Protein TusB (Yersinia pseudotuberculosis serotype O:1b (strain IP 31758)).